The primary structure comprises 222 residues: Small ribosomal subunit protein uS3 (222 aa).

In terms of domain architecture, KH type-2 spans 39-108 (IRRHIKEKLY…TISLDIKEIK (70 aa)).

This sequence belongs to the universal ribosomal protein uS3 family. As to quaternary structure, part of the 30S ribosomal subunit. Forms a tight complex with proteins S10 and S14.

In terms of biological role, binds the lower part of the 30S subunit head. Binds mRNA in the 70S ribosome, positioning it for translation. The protein is Small ribosomal subunit protein uS3 of Caldicellulosiruptor saccharolyticus (strain ATCC 43494 / DSM 8903 / Tp8T 6331).